The sequence spans 565 residues: Proline--tRNA ligase (565 aa).

The protein belongs to the class-II aminoacyl-tRNA synthetase family. ProS type 1 subfamily. In terms of assembly, homodimer.

It localises to the cytoplasm. The catalysed reaction is tRNA(Pro) + L-proline + ATP = L-prolyl-tRNA(Pro) + AMP + diphosphate. Catalyzes the attachment of proline to tRNA(Pro) in a two-step reaction: proline is first activated by ATP to form Pro-AMP and then transferred to the acceptor end of tRNA(Pro). As ProRS can inadvertently accommodate and process non-cognate amino acids such as alanine and cysteine, to avoid such errors it has two additional distinct editing activities against alanine. One activity is designated as 'pretransfer' editing and involves the tRNA(Pro)-independent hydrolysis of activated Ala-AMP. The other activity is designated 'posttransfer' editing and involves deacylation of mischarged Ala-tRNA(Pro). The misacylated Cys-tRNA(Pro) is not edited by ProRS. The chain is Proline--tRNA ligase from Lactobacillus delbrueckii subsp. bulgaricus (strain ATCC BAA-365 / Lb-18).